We begin with the raw amino-acid sequence, 78 residues long: MSRVCQLTGTRANNGMAVSHSHIRTKKLQQANLQNRRLWWAEGKRWVNLRVTTRALKTIQKKGLGPYAKSLGINLAKL.

It belongs to the bacterial ribosomal protein bL28 family.

The polypeptide is Large ribosomal subunit protein bL28 (Parasynechococcus marenigrum (strain WH8102)).